The chain runs to 368 residues: Galanin receptor type 3 (368 aa).

The Extracellular segment spans residues 1-20; that stretch reads MADAQNISLDSPGSVGAVAV. Residue Asn-6 is glycosylated (N-linked (GlcNAc...) asparagine). The chain crosses the membrane as a helical span at residues 21–41; sequence PVVFALIFLLGTVGNGLVLAV. The Cytoplasmic segment spans residues 42 to 57; it reads LLQPGPSAWQEPGSTT. A helical transmembrane segment spans residues 58–78; it reads DLFILNLAVADLCFILCCVPF. The Extracellular portion of the chain corresponds to 79 to 96; the sequence is QATIYTLDAWLFGALVCK. A disulfide bridge connects residues Cys-95 and Cys-172. The chain crosses the membrane as a helical span at residues 97–118; sequence AVHLLIYLTMYASSFTLAAVSV. Topologically, residues 119 to 138 are cytoplasmic; it reads DRYLAVRHPLRSRALRTPRN. A helical membrane pass occupies residues 139 to 159; it reads ARAAVGLVWLLAALFSAPYLS. The Extracellular portion of the chain corresponds to 160–184; sequence YYGTVRYGALELCVPAWEDARRRAL. A helical membrane pass occupies residues 185-205; sequence DVATFAAGYLLPVAVVSLAYG. The Cytoplasmic portion of the chain corresponds to 206 to 236; that stretch reads RTLRFLWAAVGPAGAAAAEARRRATGRAGRA. The helical transmembrane segment at 237–257 threads the bilayer; that stretch reads MLAVAALYALCWGPHHALILC. The Extracellular portion of the chain corresponds to 258-259; that stretch reads FW. The helical transmembrane segment at 260 to 280 threads the bilayer; it reads YGRFAFSPATYACRLASHCLA. Topologically, residues 281–368 are cytoplasmic; that stretch reads YANSCLNPLV…HGGEAARGPE (88 aa). Residue Cys-308 is the site of S-palmitoyl cysteine attachment. Residues 317–368 form a disordered region; it reads RRALRRVRPASSGPPGCPGDARPSGRLLAGGGQGPEPREGPVHGGEAARGPE.

The protein belongs to the G-protein coupled receptor 1 family.

The protein localises to the cell membrane. Receptor for the hormone galanin. Receptor for the hormone spexin-1. This Homo sapiens (Human) protein is Galanin receptor type 3 (GALR3).